A 328-amino-acid polypeptide reads, in one-letter code: tRNA dimethylallyltransferase (328 aa).

Position 10–17 (10–17 (GPTASGKT)) interacts with ATP. 12-17 (TASGKT) lines the substrate pocket.

The protein belongs to the IPP transferase family. Monomer. The cofactor is Mg(2+).

It catalyses the reaction adenosine(37) in tRNA + dimethylallyl diphosphate = N(6)-dimethylallyladenosine(37) in tRNA + diphosphate. Functionally, catalyzes the transfer of a dimethylallyl group onto the adenine at position 37 in tRNAs that read codons beginning with uridine, leading to the formation of N6-(dimethylallyl)adenosine (i(6)A). The sequence is that of tRNA dimethylallyltransferase from Bifidobacterium longum (strain NCC 2705).